An 831-amino-acid polypeptide reads, in one-letter code: Sodium/hydrogen exchanger 3 (831 aa).

An N-terminal signal peptide occupies residues 1-28 (MWHPALGPGWKPLLALALALTSLRGVRG). At 29-48 (IEEEPNSGGSFQIVTFKWHH) the chain is on the extracellular side. The helical transmembrane segment at 49-71 (VQDPYIIALWILVASLAKIVFHL) threads the bilayer. At 72 to 79 (SHKVTSVV) the chain is on the cytoplasmic side. The chain crosses the membrane as a helical span at residues 80–99 (PESALLIVLGLVLGGIVWAA). Residues 100–108 (DHIASFTLT) lie on the Extracellular side of the membrane. A helical membrane pass occupies residues 109-126 (PTLFFFYLLPPIVLDAGY). Topologically, residues 127 to 129 (FMP) are cytoplasmic. Residues 130–165 (NRLFFGNLGTILLYAVIGTIWNAATTGLSLYGVFLS) traverse the membrane as a helical segment. A 1,2-diacyl-sn-glycero-3-phospho-(1D-myo-inositol) contacts are provided by Gly-135, Gly-138, and Thr-139. Over 166–178 (GLMGELKIGLLDF) the chain is Extracellular. The helical transmembrane segment at 179–200 (LLFGSLIAAVDPVAVLAVFEEV) threads the bilayer. The Cytoplasmic segment spans residues 201-202 (HV). A helical membrane pass occupies residues 203-234 (NEVLFIIVFGESLLNDAVTVVLYNVFESFVTL). Over 235-241 (GGDAVTG) the chain is Extracellular. A helical transmembrane segment spans residues 242–276 (VDCVKGIVSFFVVSLGGTLVGVIFAFLLSLVTRFT). The Cytoplasmic segment spans residues 277–278 (KH). A helical transmembrane segment spans residues 279-301 (VRIIEPGFVFVISYLSYLTSEML). Over 302–303 (SL) the chain is Extracellular. Residues 304 to 320 (SAILAITFCGICCQKYV) form a helical membrane-spanning segment. Over 321–327 (KANISEQ) the chain is Cytoplasmic. Residues 328–356 (SATTVRYTMKMLASGAETIIFMFLGISAV) traverse the membrane as a helical segment. The Extracellular segment spans residues 357-364 (DPVIWTWN). The chain crosses the membrane as a helical span at residues 365 to 386 (TAFVLLTLVFISVYRAIGVVLQ). The Cytoplasmic portion of the chain corresponds to 387-399 (TWILNRYRMVQLE). An a 1,2-diacyl-sn-glycero-3-phospho-(1D-myo-inositol)-binding site is contributed by Met-395. Residues 400–423 (TIDQVVMSYGGLRGAVAYALVVLL) traverse the membrane as a helical segment. Residues 424-430 (DEKKVKE) lie on the Extracellular side of the membrane. Residues 431-464 (KNLFVSTTLIVVFFTVIFQGLTIKPLVQWLKVKR) traverse the membrane as a helical segment. Over 465–831 (SEQREPKLNE…QPASPESTHM (367 aa)) the chain is Cytoplasmic. Positions 494, 495, and 497 each coordinate a 1,2-diacyl-sn-glycero-3-phospho-(1D-myo-inositol). Residues Ser-552 and Ser-560 each carry the phosphoserine modification. The interval 573 to 587 (RPSTVEASVSYFLRE) is interaction with EZR. An interaction with NHERF4 region spans residues 588-665 (NVSAVCLDMQ…RKRLESFKSA (78 aa)). The interaction with AHCYL1 stretch occupies residues 589–693 (VSAVCLDMQS…AQKRRNSSIP (105 aa)). Residues Ser-590 and Ser-605 each carry the phosphoserine modification. The residue at position 661 (Ser-661) is a Phosphoserine; by SGK1. Phosphoserine is present on residues Ser-716, Ser-807, and Ser-810. The segment at 808–831 (VDSFLQADGPEEQLQPASPESTHM) is disordered. Residues 822-831 (QPASPESTHM) are compositionally biased toward polar residues.

The protein belongs to the monovalent cation:p,roton antiporter 1 (CPA1) transporter (TC 2.A.36) family. As to quaternary structure, homodimer. Found in the forms of complex and dynamic macromolecular complexes. Binds NHERF1 and NHERF2. Interacts with NHERF4 and interactions decrease in response to elevated calcium ion levels. Interacts with PDZK1 (via C-terminal PDZ domain). Interacts with CHP1; this interaction increases trafficking and activity at the plasma membrane of SLC9A3. Interacts with CHP2 and SHANK2. Interacts with AHCYL1; the interaction is required for SLC9A3 activity. Interacts with EZR; interaction targets SLC9A3 to the apical membrane. Interacts with SNX27 (via PDZ domains); directs SLC9A3 membrane insertion from early endosomes to the plasma membrane. Post-translationally, phosphorylated by PRKACA at Ser-552 and Ser-605, which inhibits activity. Phosphorylation of Ser-605 is essential for cAMP-mediated inhibition of SLC9A3. Phosphorylation at Ser-661 by SGK1 is associated with increased abundance at the cell membrane. Phosphorylation at Ser-716 by CSNK2A1 regulates SLC9A3 activity through the formation of multiple signaling complexes. In terms of tissue distribution, most abundant in colon and small intestine, followed by kidney and stomach. In kidney, expressed in proximal tubules and outer medulla (at protein level).

It localises to the apical cell membrane. It is found in the cell membrane. Its subcellular location is the recycling endosome membrane. The protein localises to the early endosome membrane. It catalyses the reaction Na(+)(in) + H(+)(out) = Na(+)(out) + H(+)(in). With respect to regulation, seems to switch between active and inactive modes in response to various stimuli. Activated directly or indirectly by membrane phosphatidylinositol (PIs). Regulated by a variety of auxiliary proteins, which facilitate the maturation, cell surface expression and function of the transporter. Inhibited specifically by the drug tenapanor. Its function is as follows. Plasma membrane Na(+)/H(+) antiporter. Exchanges intracellular H(+) ions for extracellular Na(+) in 1:1 stoichiometry, playing a key role in salt and fluid absorption and pH homeostasis. Major apical Na(+)/H(+) exchanger in kidney and intestine playing an important role in renal and intestine Na(+) absorption and blood pressure regulation. The sequence is that of Sodium/hydrogen exchanger 3 (Slc9a3) from Rattus norvegicus (Rat).